We begin with the raw amino-acid sequence, 661 residues long: Heme transporter BhuA (661 aa).

Residues 1 to 23 form the signal peptide; that stretch reads MKFTRTLVLASTFLLATVATSQA. One can recognise a TBDR plug domain in the interval 48 to 159; sequence KDNIEATGGT…AAGAIRYETV (112 aa). Residues 170–661 form the TBDR beta-barrel domain; the sequence is TFGARIIGSY…TFTFQTAFKF (492 aa).

The protein belongs to the TonB-dependent receptor family.

The protein localises to the cell outer membrane. Its function is as follows. Heme transporter. This Brucella suis biovar 1 (strain 1330) protein is Heme transporter BhuA (bhuA).